The primary structure comprises 194 residues: Imidazoleglycerol-phosphate dehydratase (194 aa).

It belongs to the imidazoleglycerol-phosphate dehydratase family.

Its subcellular location is the cytoplasm. The catalysed reaction is D-erythro-1-(imidazol-4-yl)glycerol 3-phosphate = 3-(imidazol-4-yl)-2-oxopropyl phosphate + H2O. Its pathway is amino-acid biosynthesis; L-histidine biosynthesis; L-histidine from 5-phospho-alpha-D-ribose 1-diphosphate: step 6/9. The sequence is that of Imidazoleglycerol-phosphate dehydratase from Limosilactobacillus fermentum (strain NBRC 3956 / LMG 18251) (Lactobacillus fermentum).